Consider the following 811-residue polypeptide: MRSGSRLSNYLVRLSGRVSFTQKRSLTNVKLPSNVNYERLKAAFDSDEHTLNGKNNNNEGKLFSKTALFQGQKDGSASTGLFKNSYLTSPQGLVQFSKKSKLQAQTLVDEMTRDVLTHQGKLDYIKKLDQLSDILCRTIDVAEFIRVVHDDQKWVDAAQQTHEIIFEYMNQLNTNVELYANLVKILEDKDLISQLSDEEIKVGEYLRQDFERSGIHMDPQSRDQFVSLTQEISIMGSHFNNESSSLKSDWISITSNEFSAIEDRFIQSEVMRASALYPGKKESGTYYIPLASAIPYRIMIQCGSGNLRKKMWIGLHEASDEQVQVLNHFVAYRALLAKMLGYDSYAHYQLEHKMAKKPENVLSFLTNLQENLKNSQVLKELRALSALQQGYSLLSDEELIRQIKPWDRDFLLKSFEAKKLSSTENGEKASTDTSTSTTTSTTTTDSTTTTATFSNSTDSVAIKRLCEYFSIGTVIAGLSKLFSALYNISFVVEPTVKGEVWNEKRVRKLNVLNNSNGETMGYLYLDFCSPKVFPSHFTVVCLRQLNKAESVSEHGDMVQLSKDYQLPVVALVCNFTSGNPTLLSLDQVDTIFHEMGHAMHSMIGRTQLHNLSGTRCATDFVEIPSVLMESFSKDPRVLSEIGCHYRTGEPVPINLLEQAQSQRSALEACETFVQSKMAMLDQELHSKEIVELLRQGLEAINSTEIYHQVERDLEIFADEWSTWHGKFPHLFSYGAVYYSYLLDRAIANVLWQKLFAKDPWSRDAGIKYKEEILKWGGTKDPWACLADALQMEELRKGDAHAMQIIGENSKL.

The N-terminal 25 residues, 1-25, are a transit peptide targeting the mitochondrion; sequence MRSGSRLSNYLVRLSGRVSFTQKRS. Positions 423 to 450 are disordered; that stretch reads TENGEKASTDTSTSTTTSTTTTDSTTTT. The segment covering 431–450 has biased composition (low complexity); sequence TDTSTSTTTSTTTTDSTTTT. Position 593 (His-593) interacts with Zn(2+). Glu-594 is a catalytic residue. Positions 597 and 600 each coordinate Zn(2+).

This sequence belongs to the peptidase M3 family. Zn(2+) is required as a cofactor.

It is found in the mitochondrion matrix. The enzyme catalyses Release of an N-terminal octapeptide as second stage of processing of some proteins imported into the mitochondrion.. In terms of biological role, cleaves proteins, imported into the mitochondrion, to their mature size. While most mitochondrial precursor proteins are processed to the mature form in one step by mitochondrial processing peptidase (MPP), the sequential cleavage by MIP of an octapeptide after initial processing by MPP is a required step for a subgroup of nuclear-encoded precursor proteins destined for the matrix or the inner membrane. This Lodderomyces elongisporus (strain ATCC 11503 / CBS 2605 / JCM 1781 / NBRC 1676 / NRRL YB-4239) (Yeast) protein is Mitochondrial intermediate peptidase (OCT1).